Consider the following 1422-residue polypeptide: MATLACRVQFLDDTDPFNSTNFPEPSRPPLFTFREDLALGTQLAGVHRLLQAPHKLDDCTLQLSHNGAYLDLEATLAEQRDELEGFQDDAGRGKKHSIILRTQLSVRVHACIEKLYNSSGRDLRRALFSLKQIFQDDKDLVHEFVVAEGLTCLIKVGAEADQNYQNYILRALGQIMLYVDGMNGVINRNETIQWLYTLIGSKFRLVVKTALKLLLVFVEYSESNAPLLIQAVTAVDTKRGVKPWSNIMEILEEKDGVDTELLVYAMTLVNKTLSGLPDQDTFYDVVDCLEELGIAAVSQRHLNKKGTDLDLVEQLNIYEVALRHEDGDETTEPPPSGCRDRRRASVCSSGGGEHRGLDRRRSRRHSVQSIKSTLSAPTSPCSQSAPSFKPNQVRDLREKYSNFGNNSYHSSRPSSGSSVPTTPTSSVSPPQEARLERSSPSGLLTSSFRQHQESLAAERERRRQEREERLQRIEREERNKFRYKYLEQLAAEEHEKELRSRSVSRGRADLSLDLTSPAAPACLAPLSHSPSSSDSQEALTVSASSPGTPHHPQASAGDPEPESEAEPEAEAGAGQVADEAGQDIASAHEGAETEVEQALEQEPEERASLSEKERQNEGVNERDNCSASSVSSSSSTLEREEKEDKLSRDRTTGLWPAGVQDAGVNGQCGDILTNKRFMLDMLYAHNRKSPDDEEKGDGEAGRTQQEAEAVASLATRISTLQANSQTQDESVRRVDVGCLDNRGSVKAFAEKFNSGDLGRGSISPDAEPNDKVPETAPVQPKTESDYIWDQLMANPRELRIQDMDFTDLGEEDDIDVLDVDLGHREAPGPPPPPPPTFLGLPPPPPPPLLDSIPPPPVPGNLLVPPPPVFNAPQGLGWSQVPRGQPTFTKKKKTIRLFWNEVRPFDWPCKNNRRCREFLWSKLEPIKVDTSRLEHLFESKSKELSVSKKTAADGKRQEIIVLDSKRSNAINIGLTVLPPPRTIKIAILNFDEYALNKEGIEKILTMIPTDEEKQKIQEAQLANPEIPLGSAEQFLLTLSSISELSARLHLWAFKMDYETTEKEVAEPLLDLKEGIDQLENNKTLGFILSTLLAIGNFLNGTNAKAFELSYLEKVPEVKDTVHKQSLLHHVCTMVVENFPDSSDLYSEIGAITRSAKVDFDQLQDNLCQMERRCKASWDHLKAIAKHEMKPVLKQRMSEFLKDCAERIIILKIVHRRIINRFHSFLLFMGHPPYAIREVNINKFCRIISEFALEYRTTRERVLQQKQKRANHRERNKTRGKMITDSGKFSGSSPAPPSQPQGLSYAEDAAEHENMKAVLKTSSPSVEDATPALGVRTRSRASRGSTSSWTMGTDDSPNVTDDAADEIMDRIVKSATQVPSQRVVPRERKRSRANRKSLRRTLKSGLTPEEARALGLVGTSELQL.

The GBD/FH3 domain occupies 18–411 (NSTNFPEPSR…NFGNNSYHSS (394 aa)). 8 disordered regions span residues 323-464 (RHED…RRRQ), 521-666 (ACLA…GVNG), 687-708 (RKSP…QEAE), 754-781 (SGDL…VQPK), 821-849 (LGHR…PPLL), 1262-1305 (QQKQ…SYAE), 1320-1357 (SSPS…SPNV), and 1374-1410 (TQVP…EEAR). Residue S345 is modified to Phosphoserine. Over residues 357–366 (LDRRRSRRHS) the composition is skewed to basic residues. Polar residues predominate over residues 367-390 (VQSIKSTLSAPTSPCSQSAPSFKP). S375 carries the phosphoserine modification. The segment covering 410 to 430 (SSRPSSGSSVPTTPTSSVSPP) has biased composition (low complexity). The span at 438–449 (SSPSGLLTSSFR) shows a compositional bias: polar residues. Positions 448–480 (FRQHQESLAAERERRRQEREERLQRIEREERNK) form a coiled coil. The segment covering 450–464 (QHQESLAAERERRRQ) has biased composition (basic and acidic residues). Residues 521 to 535 (ACLAPLSHSPSSSDS) show a composition bias toward low complexity. Residues 536-547 (QEALTVSASSPG) are compositionally biased toward polar residues. Composition is skewed to acidic residues over residues 559–569 (PEPESEAEPEA) and 592–603 (ETEVEQALEQEP). Over residues 604–624 (EERASLSEKERQNEGVNERDN) the composition is skewed to basic and acidic residues. Positions 626–635 (SASSVSSSSS) are enriched in low complexity. A compositionally biased stretch (basic and acidic residues) spans 637 to 651 (LEREEKEDKLSRDRT). S763 carries the post-translational modification Phosphoserine. T775 is subject to Phosphothreonine. A compositionally biased stretch (pro residues) spans 827–849 (PGPPPPPPPTFLGLPPPPPPPLL). The region spanning 827–858 (PGPPPPPPPTFLGLPPPPPPPLLDSIPPPPVP) is the FH1 domain. Residues 883–1279 (GQPTFTKKKK…HRERNKTRGK (397 aa)) enclose the FH2 domain. Residues 1264 to 1278 (KQKRANHRERNKTRG) show a composition bias toward basic residues. One can recognise a DAD domain in the interval 1359–1391 (DDAADEIMDRIVKSATQVPSQRVVPRERKRSRA). Residues 1385-1400 (ERKRSRANRKSLRRTL) are compositionally biased toward basic residues.

This sequence belongs to the formin homology family. In terms of assembly, interacts with nestin/NES-based interfilament (IF). Interacts with SQSTM1; isoform 4 threonine phosphorylation disrupts SQSTM1-binding. In terms of processing, phosphorylated on Thr-1474 and Thr-1476 by CK2. In terms of tissue distribution, expressed in the heart, kidney and brain. May be down-regulated in various types of heart diseases, including idiopathic dilated, ventricular dilated, familial dilated and perinatal dilated cardiomyopathies, as well as ischemic heart disease (at protein level).

Its subcellular location is the cytoplasm. The protein localises to the cytoskeleton. The protein resides in the myofibril. It localises to the sarcomere. It is found in the z line. Its function is as follows. Actin-organizing protein that may cause stress fiber formation together with cell elongation. Isoform 4 may play a role in actin filament polymerization in cardiomyocytes. This Homo sapiens (Human) protein is FH1/FH2 domain-containing protein 3 (FHOD3).